The chain runs to 282 residues: MSSYENHQALDGLTLGKSTDYRDNYDASLLQGVPRSLNRDPLGLTADNLPFHGADIWTLYELSWLNSQGLPQVAVGHVELDYTSVNLIESKSFKLYLNSFNQTRFDTWETVRQTLERDLRACAQGNVSVRLHRLDELEGQPVAHFHGACIDDQDISIDNYQFTTDYLQHAVSGEKQVEETLVSHLLKSNCLITHQPDWGSIQIQYRGRKIDREKLLRYLVSFRHHNEFHEQCVERIFNDILRFCQPETLSVYARYTRRGGLDINPWRSNTDFVPATGRLARQ.

88–90 (IES) lines the substrate pocket. An NADPH-binding site is contributed by 90–91 (SK). Cys190 serves as the catalytic Thioimide intermediate. Asp197 functions as the Proton donor in the catalytic mechanism. 229 to 230 (HE) is a substrate binding site. An NADPH-binding site is contributed by 258–259 (RG).

This sequence belongs to the GTP cyclohydrolase I family. QueF type 2 subfamily. In terms of assembly, homodimer.

Its subcellular location is the cytoplasm. It carries out the reaction 7-aminomethyl-7-carbaguanine + 2 NADP(+) = 7-cyano-7-deazaguanine + 2 NADPH + 3 H(+). Its pathway is tRNA modification; tRNA-queuosine biosynthesis. Its function is as follows. Catalyzes the NADPH-dependent reduction of 7-cyano-7-deazaguanine (preQ0) to 7-aminomethyl-7-deazaguanine (preQ1). The protein is NADPH-dependent 7-cyano-7-deazaguanine reductase of Salmonella heidelberg (strain SL476).